Here is a 406-residue protein sequence, read N- to C-terminus: Solute carrier family 22 member 18 (406 aa).

10 helical membrane-spanning segments follow: residues 8-28 (GIII…FMQF), 43-63 (VSFG…GPVF), 85-105 (ALYL…FLLF), 140-160 (LGLC…TLNT), 168-188 (AILA…CVPA), 226-246 (FLVK…FSII), 258-278 (AGYL…LVIG), 295-315 (LVFA…HFCF), 316-336 (LMPG…SMLT), and 374-394 (GVPI…LVLW).

Belongs to the major facilitator (TC 2.A.1) superfamily. Organic cation transporter (TC 2.A.1.19) family. Interacts with RNF167. As to expression, expressed at high levels in fetal and adult kidney and liver, and extraembryonic membranes (yolk sac). Expressed at moderate levels in intestine, heart, lung and testis.

Its subcellular location is the apical cell membrane. Functionally, may act as a transporter of organic cations based on a proton efflux antiport mechanism. May play a role in the transport of chloroquine and quinidine-related compounds in kidney. Plays a role in the regulation of lipid metabolism. This chain is Solute carrier family 22 member 18 (Slc67a1), found in Mus musculus (Mouse).